We begin with the raw amino-acid sequence, 295 residues long: Pyridoxal 5'-phosphate synthase subunit PdxS (295 aa).

Asp-25 provides a ligand contact to D-ribose 5-phosphate. The active-site Schiff-base intermediate with D-ribose 5-phosphate is the Lys-82. Gly-154 is a D-ribose 5-phosphate binding site. A D-glyceraldehyde 3-phosphate-binding site is contributed by Arg-166. Residues Gly-215 and 236–237 (GS) each bind D-ribose 5-phosphate.

It belongs to the PdxS/SNZ family. As to quaternary structure, in the presence of PdxT, forms a dodecamer of heterodimers.

It carries out the reaction aldehydo-D-ribose 5-phosphate + D-glyceraldehyde 3-phosphate + L-glutamine = pyridoxal 5'-phosphate + L-glutamate + phosphate + 3 H2O + H(+). The protein operates within cofactor biosynthesis; pyridoxal 5'-phosphate biosynthesis. Functionally, catalyzes the formation of pyridoxal 5'-phosphate from ribose 5-phosphate (RBP), glyceraldehyde 3-phosphate (G3P) and ammonia. The ammonia is provided by the PdxT subunit. Can also use ribulose 5-phosphate and dihydroxyacetone phosphate as substrates, resulting from enzyme-catalyzed isomerization of RBP and G3P, respectively. The sequence is that of Pyridoxal 5'-phosphate synthase subunit PdxS from Staphylococcus saprophyticus subsp. saprophyticus (strain ATCC 15305 / DSM 20229 / NCIMB 8711 / NCTC 7292 / S-41).